The primary structure comprises 287 residues: Pantothenate synthetase (287 aa).

30 to 37 is a binding site for ATP; sequence MGYLHEGH. Residue H37 is the Proton donor of the active site. Position 61 (Q61) interacts with (R)-pantoate. A beta-alanine-binding site is contributed by Q61. 150–153 is an ATP binding site; that stretch reads GMKD. A (R)-pantoate-binding site is contributed by Q156. Residues V179 and 187-190 each bind ATP; that span reads LSSR.

The protein belongs to the pantothenate synthetase family. Homodimer.

The protein resides in the cytoplasm. The catalysed reaction is (R)-pantoate + beta-alanine + ATP = (R)-pantothenate + AMP + diphosphate + H(+). Its pathway is cofactor biosynthesis; (R)-pantothenate biosynthesis; (R)-pantothenate from (R)-pantoate and beta-alanine: step 1/1. In terms of biological role, catalyzes the condensation of pantoate with beta-alanine in an ATP-dependent reaction via a pantoyl-adenylate intermediate. The sequence is that of Pantothenate synthetase from Coprothermobacter proteolyticus (strain ATCC 35245 / DSM 5265 / OCM 4 / BT).